The primary structure comprises 163 residues: Phosphopantetheine adenylyltransferase (163 aa).

Residue threonine 11 coordinates substrate. ATP contacts are provided by residues 11-12 (TF) and histidine 19. The substrate site is built by lysine 43, leucine 75, and arginine 89. Residues 90–92 (GLR), glutamate 100, and 125–131 (YSFISST) contribute to the ATP site.

Belongs to the bacterial CoaD family. As to quaternary structure, homohexamer. Requires Mg(2+) as cofactor.

It localises to the cytoplasm. The catalysed reaction is (R)-4'-phosphopantetheine + ATP + H(+) = 3'-dephospho-CoA + diphosphate. It participates in cofactor biosynthesis; coenzyme A biosynthesis; CoA from (R)-pantothenate: step 4/5. Its function is as follows. Reversibly transfers an adenylyl group from ATP to 4'-phosphopantetheine, yielding dephospho-CoA (dPCoA) and pyrophosphate. The polypeptide is Phosphopantetheine adenylyltransferase (Acinetobacter baumannii (strain ACICU)).